An 843-amino-acid polypeptide reads, in one-letter code: Glycogen phosphorylase, brain form (843 aa).

N-acetylalanine is present on A2. At S15 the chain carries Phosphoserine; by PHK; in form phosphorylase A. Residues D43, Y197, and R310 each coordinate AMP. Y197 is modified (phosphotyrosine). Phosphotyrosine is present on Y473. K569 contributes to the pyridoxal 5'-phosphate binding site. Residues 677-678 are pyridoxal 5'-phosphate; the sequence is TG. K681 carries the N6-(pyridoxal phosphate)lysine modification.

The protein belongs to the glycogen phosphorylase family. In terms of assembly, homodimer. Dimers associate into a tetramer to form the enzymatically active phosphorylase A. The cofactor is pyridoxal 5'-phosphate. In terms of processing, phosphorylation of Ser-15 converts phosphorylase B (unphosphorylated) to phosphorylase A.

The enzyme catalyses [(1-&gt;4)-alpha-D-glucosyl](n) + phosphate = [(1-&gt;4)-alpha-D-glucosyl](n-1) + alpha-D-glucose 1-phosphate. With respect to regulation, activity of phosphorylase is controlled both by allosteric means (through the non-covalent binding of metabolites) and by covalent modification. Thus AMP allosterically activates, whereas ATP, ADP, and glucose-6-phosphate allosterically inhibit, phosphorylase B. Its function is as follows. Glycogen phosphorylase that regulates glycogen mobilization. Phosphorylase is an important allosteric enzyme in carbohydrate metabolism. Enzymes from different sources differ in their regulatory mechanisms and in their natural substrates. However, all known phosphorylases share catalytic and structural properties. The protein is Glycogen phosphorylase, brain form (PYGB) of Ovis aries (Sheep).